The following is a 234-amino-acid chain: Sugar fermentation stimulation protein A (234 aa).

Positions 201–220 (LLSEAQQRGVEILAYKAEIS) form a DNA-binding region, H-T-H motif.

Belongs to the SfsA family.

Functionally, binds to DNA non-specifically. Could be a regulatory factor involved in maltose metabolism. The polypeptide is Sugar fermentation stimulation protein A (Shigella dysenteriae serotype 1 (strain Sd197)).